Reading from the N-terminus, the 92-residue chain is Acylphosphatase (92 aa).

The 88-residue stretch at 5 to 92 (GVTIYVYGRV…EDIADFIVRH (88 aa)) folds into the Acylphosphatase-like domain. Active-site residues include R20 and N38.

It belongs to the acylphosphatase family.

The catalysed reaction is an acyl phosphate + H2O = a carboxylate + phosphate + H(+). The chain is Acylphosphatase (acyP) from Photorhabdus laumondii subsp. laumondii (strain DSM 15139 / CIP 105565 / TT01) (Photorhabdus luminescens subsp. laumondii).